A 408-amino-acid polypeptide reads, in one-letter code: Sprouty-related, EVH1 domain-containing protein 3 (408 aa).

The region spanning 1-113 is the WH1 domain; it reads MVRVRAVVMA…KSLLAALAAL (113 aa). Positions 118–226 are disordered; the sequence is LTPSSSSSSS…YEDYRRSGPP (109 aa). Low complexity predominate over residues 120-130; the sequence is PSSSSSSSSPS. The region spanning 192-242 is the KBD domain; sequence LPFTGIPEPSESLAGAGSQGWGSRGYEDYRRSGPPPPPLALSTCVVRFAKT. Residue arginine 238 is modified to Asymmetric dimethylarginine. Arginine 246 is subject to Omega-N-methylarginine. The interval 256 to 286 is disordered; sequence LPAPLTEAAPPAPPARPPPGPGPTPAPAKAS. The span at 265 to 281 shows a compositional bias: pro residues; the sequence is PPAPPARPPPGPGPTPA. Positions 294 to 405 constitute an SPR domain; sequence RCVHCRALFR…CAGCGGRHEE (112 aa).

As to quaternary structure, interacts with palmitoyltransferase ZDHHC17/HIP14; the interaction leads to palmitoylation of SPRED3. In terms of processing, phosphorylated on tyrosine. Palmitoylated by ZDHHC17/HIP14. Post-translationally, ubiquitinated. As to expression, brain specific.

It localises to the cell membrane. Its function is as follows. Tyrosine kinase substrate that inhibits growth-factor-mediated activation of MAP kinase. Inhibits fibroblast growth factor (FGF)-induced retinal lens fiber differentiation, probably by inhibiting FGF-mediated phosphorylation of ERK1/2. Inhibits TGFB-induced epithelial-to-mesenchymal transition in lens epithelial cells. This is Sprouty-related, EVH1 domain-containing protein 3 (Spred3) from Mus musculus (Mouse).